Consider the following 175-residue polypeptide: Large ribosomal subunit protein uL10 (175 aa).

This sequence belongs to the universal ribosomal protein uL10 family. Part of the ribosomal stalk of the 50S ribosomal subunit. The N-terminus interacts with L11 and the large rRNA to form the base of the stalk. The C-terminus forms an elongated spine to which L12 dimers bind in a sequential fashion forming a multimeric L10(L12)X complex.

Functionally, forms part of the ribosomal stalk, playing a central role in the interaction of the ribosome with GTP-bound translation factors. In Pelotomaculum thermopropionicum (strain DSM 13744 / JCM 10971 / SI), this protein is Large ribosomal subunit protein uL10.